The chain runs to 525 residues: Putative ribose/galactose/methyl galactoside import ATP-binding protein (525 aa).

Residues 1–20 (MSGSATASPPAKPDLPSSDG) form a disordered region. 2 consecutive ABC transporter domains span residues 33–269 (LEIS…VGRE) and 279–523 (KPAG…SGHR). ATP is bound at residue 65-72 (GENGAGKS).

It belongs to the ABC transporter superfamily. Carbohydrate importer 2 (CUT2) (TC 3.A.1.2) family.

The protein localises to the cell inner membrane. The enzyme catalyses D-ribose(out) + ATP + H2O = D-ribose(in) + ADP + phosphate + H(+). It catalyses the reaction D-galactose(out) + ATP + H2O = D-galactose(in) + ADP + phosphate + H(+). In terms of biological role, part of an ABC transporter complex involved in carbohydrate import. Could be involved in ribose, galactose and/or methyl galactoside import. Responsible for energy coupling to the transport system. The protein is Putative ribose/galactose/methyl galactoside import ATP-binding protein of Pseudomonas syringae pv. tomato (strain ATCC BAA-871 / DC3000).